The chain runs to 252 residues: Imidazole glycerol phosphate synthase subunit HisF (252 aa).

Active-site residues include D11 and D130.

This sequence belongs to the HisA/HisF family. Heterodimer of HisH and HisF.

The protein localises to the cytoplasm. The enzyme catalyses 5-[(5-phospho-1-deoxy-D-ribulos-1-ylimino)methylamino]-1-(5-phospho-beta-D-ribosyl)imidazole-4-carboxamide + L-glutamine = D-erythro-1-(imidazol-4-yl)glycerol 3-phosphate + 5-amino-1-(5-phospho-beta-D-ribosyl)imidazole-4-carboxamide + L-glutamate + H(+). It functions in the pathway amino-acid biosynthesis; L-histidine biosynthesis; L-histidine from 5-phospho-alpha-D-ribose 1-diphosphate: step 5/9. Its function is as follows. IGPS catalyzes the conversion of PRFAR and glutamine to IGP, AICAR and glutamate. The HisF subunit catalyzes the cyclization activity that produces IGP and AICAR from PRFAR using the ammonia provided by the HisH subunit. This Thermococcus onnurineus (strain NA1) protein is Imidazole glycerol phosphate synthase subunit HisF.